Consider the following 556-residue polypeptide: Guanine nucleotide-binding protein-like 3 homolog (556 aa).

Positions 29-50 (NRKVKKEAKKNGTTNKKEKTIS) are disordered. The stretch at 58–95 (KEEILVQAEQEREKIKVRQEAAKEAAKIHRIEKRKNNL) forms a coiled coil. The 180-residue stretch at 138 to 317 (ASEVRKTVEI…LIDSPGVILV (180 aa)) folds into the CP-type G domain. Residues 184–187 (NKID), 266–273 (GFPNVGKS), and 310–313 (DSPG) each bind GTP. Disordered stretches follow at residues 461 to 508 (APHN…PESL) and 525 to 556 (KKQKKKSKKTANRADKLSDSLGNMLGGDAMEM). The segment covering 466–478 (DEEEDDDDEMETD) has biased composition (acidic residues). Residues 525 to 535 (KKQKKKSKKTA) show a composition bias toward basic residues.

The protein belongs to the TRAFAC class YlqF/YawG GTPase family.

The protein localises to the nucleus. Functionally, may play a role in regulating cellular proliferation in both germline and somatic tissues. This Caenorhabditis elegans protein is Guanine nucleotide-binding protein-like 3 homolog.